The sequence spans 247 residues: MWCSLALILILVTVSGIMCNRTDFCVGSPGIPGTPGSHGLPGRDGRDGVKGDPGPPGPMGPPGVMPGFPGCNGMNGIPGAPGERGDKGDPGERGPPGLPASLDEEIQTIFHNLKHKILQLTGVLSLQGSMLAVGDKVFATNGQSVDFNAIKETCARAGGDVAAPRNSEENTAISSIVKKYNIYSYLGLTEGHTPGDFHYLDGSPLNYTNWYPGEPRGRGKEKCAEMYLDGTWNDKNCLQSRLTICEF.

The N-terminal stretch at 1 to 19 is a signal peptide; that stretch reads MWCSLALILILVTVSGIMC. The N-linked (GlcNAc...) asparagine glycan is linked to N20. The Collagen-like domain maps to 27–99; that stretch reads GSPGIPGTPG…PGERGPPGLP (73 aa). 4-hydroxyproline occurs at positions 29, 32, 35, 41, 53, 56, 62, 66, and 69. The segment at 32 to 101 is disordered; the sequence is PGTPGSHGLP…ERGPPGLPAS (70 aa). Over residues 41–50 the composition is skewed to basic and acidic residues; it reads PGRDGRDGVK. Positions 53 to 64 are enriched in pro residues; the sequence is PGPPGPMGPPGV. Positions 83–92 are enriched in basic and acidic residues; it reads ERGDKGDPGE. The 117-residue stretch at 131 to 247 folds into the C-type lectin domain; sequence LAVGDKVFAT…LQSRLTICEF (117 aa). 2 disulfide bridges follow: C154–C245 and C223–C237. An N-linked (GlcNAc...) asparagine glycan is attached at N206. Residues E214, R216, N233, and D234 each coordinate Ca(2+).

It belongs to the SFTPA family. Oligomeric complex of 6 set of homotrimers.

Its subcellular location is the secreted. It localises to the extracellular space. It is found in the extracellular matrix. The protein localises to the surface film. In terms of biological role, in presence of calcium ions, it binds to surfactant phospholipids and contributes to lower the surface tension at the air-liquid interface in the alveoli of the mammalian lung and is essential for normal respiration. Enhances the expression of MYO18A/SP-R210 on alveolar macrophages. The polypeptide is Pulmonary surfactant-associated protein A (SFTPA1) (Cavia porcellus (Guinea pig)).